The chain runs to 339 residues: Putative pectinesterase 10 (339 aa).

An N-terminal signal peptide occupies residues 1 to 28 (MKGVTIHNFCYSYFKVCLLVMSLAYGSA). Residue asparagine 112 is glycosylated (N-linked (GlcNAc...) asparagine). Threonine 116 provides a ligand contact to substrate. Aspartate 169 acts as the Proton donor in catalysis. Aspartate 190 (nucleophile) is an active-site residue. Arginine 252 and tryptophan 254 together coordinate substrate. An N-linked (GlcNAc...) asparagine glycan is attached at asparagine 322.

This sequence belongs to the pectinesterase family. As to expression, expressed in siliques.

It is found in the secreted. Its subcellular location is the cell wall. The enzyme catalyses [(1-&gt;4)-alpha-D-galacturonosyl methyl ester](n) + n H2O = [(1-&gt;4)-alpha-D-galacturonosyl](n) + n methanol + n H(+). It functions in the pathway glycan metabolism; pectin degradation; 2-dehydro-3-deoxy-D-gluconate from pectin: step 1/5. Its function is as follows. Acts in the modification of cell walls via demethylesterification of cell wall pectin. This is Putative pectinesterase 10 (PME10) from Arabidopsis thaliana (Mouse-ear cress).